The sequence spans 673 residues: tRNA 5-methylaminomethyl-2-thiouridine biosynthesis bifunctional protein MnmC (673 aa).

The tRNA (mnm(5)s(2)U34)-methyltransferase stretch occupies residues 1–245 (MSHAPIQTAA…KREMLIGELP (245 aa)). An FAD-dependent cmnm(5)s(2)U34 oxidoreductase region spans residues 272–673 (IGGGVASALT…VRKLLKGRAV (402 aa)).

The protein in the N-terminal section; belongs to the methyltransferase superfamily. tRNA (mnm(5)s(2)U34)-methyltransferase family. In the C-terminal section; belongs to the DAO family. It depends on FAD as a cofactor.

The protein resides in the cytoplasm. It catalyses the reaction 5-aminomethyl-2-thiouridine(34) in tRNA + S-adenosyl-L-methionine = 5-methylaminomethyl-2-thiouridine(34) in tRNA + S-adenosyl-L-homocysteine + H(+). Functionally, catalyzes the last two steps in the biosynthesis of 5-methylaminomethyl-2-thiouridine (mnm(5)s(2)U) at the wobble position (U34) in tRNA. Catalyzes the FAD-dependent demodification of cmnm(5)s(2)U34 to nm(5)s(2)U34, followed by the transfer of a methyl group from S-adenosyl-L-methionine to nm(5)s(2)U34, to form mnm(5)s(2)U34. This chain is tRNA 5-methylaminomethyl-2-thiouridine biosynthesis bifunctional protein MnmC, found in Serratia proteamaculans (strain 568).